Reading from the N-terminus, the 71-residue chain is Small ribosomal subunit protein bS21 (71 aa).

Residues 50–59 (AAAVKRHAKK) are compositionally biased toward basic residues. Residues 50–71 (AAAVKRHAKKVQREQRRAVRLY) are disordered. The segment covering 60–71 (VQREQRRAVRLY) has biased composition (basic and acidic residues).

Belongs to the bacterial ribosomal protein bS21 family.

The polypeptide is Small ribosomal subunit protein bS21 (Pseudomonas fluorescens (strain ATCC BAA-477 / NRRL B-23932 / Pf-5)).